The following is a 269-amino-acid chain: MPELPEVETSRRGIEPHLVGATILHAVVRNGRLRWPVSNEIHTLSDKPVLSVQRRAKYLLLELPDGWIIIHLGMSGSLRILSEELPAEKHDHVDLVMSNGKVLRYTDPRRFGAWLWTKELEGHNVLAHLGPEPLSEAFNAEYLKARCAKKKTPIKPWLMDNKLVVGVGNIYASESLFAAGIHPDRLASSLSEQECEILVKVIKAVLLRSIEQGGTTLKDFLQSDGKPGYFAQELQVYGRKGEPCRVCGTPIVASKHAQRATFYCRQCQK.

The active-site Schiff-base intermediate with DNA is the proline 2. The active-site Proton donor is glutamate 3. Lysine 57 (proton donor; for beta-elimination activity) is an active-site residue. DNA-binding residues include histidine 90, arginine 109, and lysine 150. The FPG-type zinc finger occupies 235–269 (QVYGRKGEPCRVCGTPIVASKHAQRATFYCRQCQK). Arginine 259 functions as the Proton donor; for delta-elimination activity in the catalytic mechanism.

Belongs to the FPG family. Monomer. Zn(2+) is required as a cofactor.

The enzyme catalyses Hydrolysis of DNA containing ring-opened 7-methylguanine residues, releasing 2,6-diamino-4-hydroxy-5-(N-methyl)formamidopyrimidine.. It catalyses the reaction 2'-deoxyribonucleotide-(2'-deoxyribose 5'-phosphate)-2'-deoxyribonucleotide-DNA = a 3'-end 2'-deoxyribonucleotide-(2,3-dehydro-2,3-deoxyribose 5'-phosphate)-DNA + a 5'-end 5'-phospho-2'-deoxyribonucleoside-DNA + H(+). Functionally, involved in base excision repair of DNA damaged by oxidation or by mutagenic agents. Acts as a DNA glycosylase that recognizes and removes damaged bases. Has a preference for oxidized purines, such as 7,8-dihydro-8-oxoguanine (8-oxoG). Has AP (apurinic/apyrimidinic) lyase activity and introduces nicks in the DNA strand. Cleaves the DNA backbone by beta-delta elimination to generate a single-strand break at the site of the removed base with both 3'- and 5'-phosphates. This Enterobacter sp. (strain 638) protein is Formamidopyrimidine-DNA glycosylase.